The chain runs to 85 residues: UPF0386 protein Bind_1628 (85 aa).

It belongs to the UPF0386 family.

The protein is UPF0386 protein Bind_1628 of Beijerinckia indica subsp. indica (strain ATCC 9039 / DSM 1715 / NCIMB 8712).